The chain runs to 357 residues: Anthranilate phosphoribosyltransferase (357 aa).

Residues G91, 94–95, T99, 101–104, 119–127, and S131 contribute to the 5-phospho-alpha-D-ribose 1-diphosphate site; these read GD, NIST, and KHGNRSVSS. G91 is an anthranilate binding site. S103 contributes to the Mg(2+) binding site. Residue N122 coordinates anthranilate. An anthranilate-binding site is contributed by R177. The Mg(2+) site is built by D235 and E236.

Belongs to the anthranilate phosphoribosyltransferase family. In terms of assembly, homodimer. It depends on Mg(2+) as a cofactor.

It carries out the reaction N-(5-phospho-beta-D-ribosyl)anthranilate + diphosphate = 5-phospho-alpha-D-ribose 1-diphosphate + anthranilate. It functions in the pathway amino-acid biosynthesis; L-tryptophan biosynthesis; L-tryptophan from chorismate: step 2/5. Its function is as follows. Catalyzes the transfer of the phosphoribosyl group of 5-phosphorylribose-1-pyrophosphate (PRPP) to anthranilate to yield N-(5'-phosphoribosyl)-anthranilate (PRA). The sequence is that of Anthranilate phosphoribosyltransferase from Shewanella baltica (strain OS155 / ATCC BAA-1091).